The primary structure comprises 223 residues: N-(5'-phosphoribosyl)anthranilate isomerase (223 aa).

It belongs to the TrpF family.

It carries out the reaction N-(5-phospho-beta-D-ribosyl)anthranilate = 1-(2-carboxyphenylamino)-1-deoxy-D-ribulose 5-phosphate. It participates in amino-acid biosynthesis; L-tryptophan biosynthesis; L-tryptophan from chorismate: step 3/5. The polypeptide is N-(5'-phosphoribosyl)anthranilate isomerase (Moorella thermoacetica (strain ATCC 39073 / JCM 9320)).